A 434-amino-acid chain; its full sequence is Serine--tRNA ligase (434 aa).

Position 237 to 239 (237 to 239 (TAE)) interacts with L-serine. Residue 268–270 (RAE) coordinates ATP. Residue E291 participates in L-serine binding. 358–361 (EISS) is an ATP binding site. L-serine is bound at residue S393.

Belongs to the class-II aminoacyl-tRNA synthetase family. Type-1 seryl-tRNA synthetase subfamily. Homodimer. The tRNA molecule binds across the dimer.

It is found in the cytoplasm. It catalyses the reaction tRNA(Ser) + L-serine + ATP = L-seryl-tRNA(Ser) + AMP + diphosphate + H(+). The catalysed reaction is tRNA(Sec) + L-serine + ATP = L-seryl-tRNA(Sec) + AMP + diphosphate + H(+). Its pathway is aminoacyl-tRNA biosynthesis; selenocysteinyl-tRNA(Sec) biosynthesis; L-seryl-tRNA(Sec) from L-serine and tRNA(Sec): step 1/1. Functionally, catalyzes the attachment of serine to tRNA(Ser). Is also able to aminoacylate tRNA(Sec) with serine, to form the misacylated tRNA L-seryl-tRNA(Sec), which will be further converted into selenocysteinyl-tRNA(Sec). The polypeptide is Serine--tRNA ligase (Rhodopseudomonas palustris (strain ATCC BAA-98 / CGA009)).